The chain runs to 222 residues: uncharacterized protein (222 aa).

This is an uncharacterized protein from Acanthamoeba polyphaga mimivirus (APMV).